Reading from the N-terminus, the 1693-residue chain is MADLEVYKNLSPEKVERCMSVMQSGTQMIKLKRGTKGLVRLFYLDEHRTRLRWRPSRKSEKAKILIDSIYKVTEGRQSEIFHRQAEGNFDPSCCFTIYHGNHMESLDLITSNPEEARTWITGLKYLMAGISDEDSLAKRQRTHDQWVKQTFEEADKNGDGLLNIEEIHQLMHKLNVNLPRRKVRQMFQEADTDENQGTLTFEEFCVFYKMMSLRRDLYLLLLSYSDKKDHLTVEELAQFLKVEQKMNNVTTDYCLDIIKKFEVSEENKVKNVLGIEGFTNFMRSPACDIFNPLHHEVYQDMDQPLCNYYIASSHNTYLTGDQLLSQSKVDMYARVLQEGCRCVEVDCWDGPDGEPVVHHGYTLTSKILFRDVVETINKHAFVKNEFPVILSIENHCSIQQQRKIAQYLKGIFGDKLDLSSVDTGECKQLPSPQSLKGKILVKGKKLPYHLGDDAEEGEVSDEDSADEIEDECKFKLHYSNGTTEHQVESFIRKKLESLLKESQIRDKEDPDSFTVRALLKATHEGLNAHLKQSPDVKESGKKSHGRSLMTNFGKHKKTTKSRSKSYSTDDEEDTQQSTGKEGGQLYRLGRRRKTMKLCRELSDLVVYTNSVAAQDIVDDGTTGNVLSFSETRAHQVVQQKSEQFMIYNQKQLTRIYPSAYRIDSSNFNPLPYWNAGCQLVALNYQSEGRMMQLNRAKFKANGNCGYVLKPQQMCKGTFNPFSGDPLPANPKKQLILKVISGQQLPKPPDSMFGDRGEIIDPFVEVEIIGLPVDCCKDQTRVVDDNGFNPVWEETLTFTVHMPEIALVRFLVWDHDPIGRDFVGQRTVTFSSLVPGYRHVYLEGLTEASIFVHITINEIYGKWSPLILNPSYTILHFLGATKNRQLQGLKGLFNKNPRHSSSENNSHYVRKRSIGDRILRRTASAPAKGRKKSKMGFQEMVEIKDSVSEATRDQDGVLRRTTRSLQARPVSMPVDRNLLGALSLPVSETAKDIEGKENSLAEDKDGRRKGKASIKDPHFLNFNKKLSSSSSALLHKDTSQGDTIVSTAHMSVTGEQLGMSSPRGGRTTSNATSNCQENPCPSKSLSPKQHLAPDPVVNPTQDLHGVKIKEKGNPEDFVEGKSILSGSVLSHSNLEIKNLEGNRGKGRAATSFSLSDVSMLCSDIPDLHSTAILQESVISHLIDNVTLTNENEPGSSISALIGQFDETNNQALTVVSHLHNTSVMSGHCPLPSLGLKMPIKHGFCKGKSKSSFLCSSPELIALSSSETTKHATNTVYETTCTPISKTKPDDDLSSKAKTAALESNLPGSPNTSRGWLPKSPTKGEDWETLKSCSPASSPDLTLEDVIADPTLCFNSGESSLVEIDGESENLSLTTCEYRREGTSQLASPLKLKYNQGVVEHFQRGLRNGYCKETLRPSVPEIFNNIQDVKTQSISYLAYQGAGFVHNHFSDSDAKMFQTCVPQQSSAQDMHVPVPKQLAHLPLPALKLPSPCKSKSLGDLTSEDIACNFESKYQCISKSFVTTGIRDKKGVTVKTKSLEPIDALTEQLRKLVSFDQEDNCQVLYSKQDANQLPRALVRKLSSRSQSRVRNIASRAKEKQEANKQKVPNPSNGAGVVLRNKPSAPTPAVNRHSTGSYIAGYLKNTKGGGLEGRGIPEGACTALHYGHVDQFCSDNSVLQTEPSSDDKPEIYFLLRL.

One can recognise a PH domain in the interval 20–128 (SVMQSGTQMI…WITGLKYLMA (109 aa)). 3 consecutive EF-hand domains span residues 142 to 177 (THDQ…LNVN), 178 to 214 (LPRR…MSLR), and 226 to 246 (DKKD…EQKM). Residues D155, N157, D159, and E166 each coordinate Ca(2+). A PI-PLC X-box domain is found at 299–444 (QDMDQPLCNY…LKGKILVKGK (146 aa)). H314 is a catalytic residue. Residues N315, E344, and D346 each contribute to the Ca(2+) site. The active site involves H358. Residue E393 participates in Ca(2+) binding. Substrate is bound by residues K442 and K444. The tract at residues 526–585 (LNAHLKQSPDVKESGKKSHGRSLMTNFGKHKKTTKSRSKSYSTDDEEDTQQSTGKEGGQL) is disordered. The segment covering 532–541 (QSPDVKESGK) has biased composition (basic and acidic residues). Over residues 553–563 (GKHKKTTKSRS) the composition is skewed to basic residues. Residues 601 to 714 (LSDLVVYTNS…GYVLKPQQMC (114 aa)) form the PI-PLC Y-box domain. S627 and R654 together coordinate substrate. Residues 715-843 (KGTFNPFSGD…PGYRHVYLEG (129 aa)) enclose the C2 domain. Residues I758, D760, D784, D813, H814, and D815 each contribute to the Ca(2+) site. The segment covering 992 to 1005 (IEGKENSLAEDKDG) has biased composition (basic and acidic residues). Disordered stretches follow at residues 992–1014 (IEGK…ASIK), 1052–1089 (TGEQ…PKQH), 1300–1329 (LESN…ETLK), and 1578–1613 (LSSR…GAGV). Positions 1065-1086 (RTTSNATSNCQENPCPSKSLSP) are enriched in polar residues. Positions 1592 to 1601 (RAKEKQEANK) are enriched in basic and acidic residues.

It depends on Ca(2+) as a cofactor. Expressed in brain and to a lower extent in lung. In brain, it is found in cerebrum, cerebellum and spinal cord. In embryo expressed in the notochord, developing spinal cord (in a ventral to dorsal gradient), dorsal root ganglia, cerebellum and dermatomyosome.

The protein resides in the cytoplasm. The protein localises to the membrane. The catalysed reaction is a 1,2-diacyl-sn-glycero-3-phospho-(1D-myo-inositol-4,5-bisphosphate) + H2O = 1D-myo-inositol 1,4,5-trisphosphate + a 1,2-diacyl-sn-glycerol + H(+). In terms of biological role, the production of the second messenger molecules diacylglycerol (DAG) and inositol 1,4,5-trisphosphate (IP3) is mediated by calcium-activated phosphatidylinositol-specific phospholipase C enzymes. The protein is 1-phosphatidylinositol 4,5-bisphosphate phosphodiesterase eta-1 of Homo sapiens (Human).